Consider the following 176-residue polypeptide: Protein GrpE (176 aa).

This sequence belongs to the GrpE family. Homodimer.

The protein localises to the cytoplasm. Its function is as follows. Participates actively in the response to hyperosmotic and heat shock by preventing the aggregation of stress-denatured proteins, in association with DnaK and GrpE. It is the nucleotide exchange factor for DnaK and may function as a thermosensor. Unfolded proteins bind initially to DnaJ; upon interaction with the DnaJ-bound protein, DnaK hydrolyzes its bound ATP, resulting in the formation of a stable complex. GrpE releases ADP from DnaK; ATP binding to DnaK triggers the release of the substrate protein, thus completing the reaction cycle. Several rounds of ATP-dependent interactions between DnaJ, DnaK and GrpE are required for fully efficient folding. In Meiothermus ruber, this protein is Protein GrpE.